The sequence spans 333 residues: uncharacterized protein (333 aa).

A signal peptide spans 1–16 (MRPFLMILSVTYIASA). N-linked (GlcNAc...) asparagine glycosylation is present at N204.

This is an uncharacterized protein from Encephalitozoon cuniculi (strain GB-M1) (Microsporidian parasite).